Here is a 125-residue protein sequence, read N- to C-terminus: Ribosome-binding factor A (125 aa).

It belongs to the RbfA family. As to quaternary structure, monomer. Binds 30S ribosomal subunits, but not 50S ribosomal subunits or 70S ribosomes.

Its subcellular location is the cytoplasm. One of several proteins that assist in the late maturation steps of the functional core of the 30S ribosomal subunit. Associates with free 30S ribosomal subunits (but not with 30S subunits that are part of 70S ribosomes or polysomes). Required for efficient processing of 16S rRNA. May interact with the 5'-terminal helix region of 16S rRNA. The sequence is that of Ribosome-binding factor A from Xylella fastidiosa (strain M23).